The following is a 383-amino-acid chain: Phosphoenolpyruvate/phosphate translocator 2, chloroplastic (383 aa).

The transit peptide at 1-55 directs the protein to the chloroplast; it reads MFALTFLNPNPRLPSPLFLAKSTPESALSRRSRAFSSSNSYPWRPNLRFNGFKLK. 8 helical membrane-spanning segments follow: residues 76–96, 108–128, 143–163, 179–199, 210–232, 253–273, 299–319, and 350–369; these read GLKL…YNIF, ATVT…MWLL, VIVQ…VSLG, FFTV…WIVC, LASF…SNVT, INLF…LAIL, IMSL…YMIL, and VSPL…YLYS. One can recognise an EamA domain in the interval 93-212; it reads YNIFNKQVLR…PIVAGVSLAS (120 aa).

This sequence belongs to the TPT transporter family. PPT (TC 2.A.7.9) subfamily. As to expression, widely expressed in leaves throughout development. In flowers, expressed in sepals and pistils.

The protein resides in the plastid. The protein localises to the chloroplast membrane. Its function is as follows. Phosphoenolpyruvate/phosphate translocator that transports phosphoenolpyruvate (PEP), 2-phosphoglycerate and 3-phosphoglycerate. The sequence is that of Phosphoenolpyruvate/phosphate translocator 2, chloroplastic (PPT2) from Arabidopsis thaliana (Mouse-ear cress).